The chain runs to 236 residues: Cytochrome c biogenesis ATP-binding export protein CcmA (236 aa).

Positions 14–235 constitute an ABC transporter domain; that stretch reads LEATGLQVAR…SAGDRVTGTE (222 aa). Position 46–53 (46–53) interacts with ATP; the sequence is GANGSGKT.

It belongs to the ABC transporter superfamily. CcmA exporter (TC 3.A.1.107) family. In terms of assembly, the complex is composed of two ATP-binding proteins (CcmA) and two transmembrane proteins (CcmB).

It is found in the cell inner membrane. The enzyme catalyses heme b(in) + ATP + H2O = heme b(out) + ADP + phosphate + H(+). In terms of biological role, part of the ABC transporter complex CcmAB involved in the biogenesis of c-type cytochromes; once thought to export heme, this seems not to be the case, but its exact role is uncertain. Responsible for energy coupling to the transport system. This Alkalilimnicola ehrlichii (strain ATCC BAA-1101 / DSM 17681 / MLHE-1) protein is Cytochrome c biogenesis ATP-binding export protein CcmA.